The chain runs to 280 residues: tRNA pseudouridine synthase A (280 aa).

Asp-55 (nucleophile) is an active-site residue. Position 110 (Tyr-110) interacts with substrate.

It belongs to the tRNA pseudouridine synthase TruA family.

It catalyses the reaction uridine(38/39/40) in tRNA = pseudouridine(38/39/40) in tRNA. Functionally, formation of pseudouridine at positions 38, 39 and 40 in the anticodon stem and loop of transfer RNAs. This chain is tRNA pseudouridine synthase A, found in Methanosphaerula palustris (strain ATCC BAA-1556 / DSM 19958 / E1-9c).